Reading from the N-terminus, the 137-residue chain is Fluoride-specific ion channel FluC 1 (137 aa).

4 consecutive transmembrane segments (helical) span residues 4–24, 37–57, 62–82, and 100–120; these read LIYI…YYLG, LATL…TTYI, ILPA…FTTF, and IAFL…GLGY. Na(+) contacts are provided by Gly-77 and Thr-80.

This sequence belongs to the fluoride channel Fluc/FEX (TC 1.A.43) family.

Its subcellular location is the cell membrane. The catalysed reaction is fluoride(in) = fluoride(out). Its activity is regulated as follows. Na(+) is not transported, but it plays an essential structural role and its presence is essential for fluoride channel function. Its function is as follows. Fluoride-specific ion channel. Important for reducing fluoride concentration in the cell, thus reducing its toxicity. The chain is Fluoride-specific ion channel FluC 1 from Bacillus cereus (strain ATCC 10987 / NRS 248).